Reading from the N-terminus, the 273-residue chain is Ribosomal RNA small subunit methyltransferase A (273 aa).

S-adenosyl-L-methionine is bound by residues asparagine 18, leucine 20, glycine 45, glutamate 66, aspartate 91, and asparagine 113.

This sequence belongs to the class I-like SAM-binding methyltransferase superfamily. rRNA adenine N(6)-methyltransferase family. RsmA subfamily.

The protein localises to the cytoplasm. It catalyses the reaction adenosine(1518)/adenosine(1519) in 16S rRNA + 4 S-adenosyl-L-methionine = N(6)-dimethyladenosine(1518)/N(6)-dimethyladenosine(1519) in 16S rRNA + 4 S-adenosyl-L-homocysteine + 4 H(+). Functionally, specifically dimethylates two adjacent adenosines (A1518 and A1519) in the loop of a conserved hairpin near the 3'-end of 16S rRNA in the 30S particle. May play a critical role in biogenesis of 30S subunits. This is Ribosomal RNA small subunit methyltransferase A from Escherichia fergusonii (strain ATCC 35469 / DSM 13698 / CCUG 18766 / IAM 14443 / JCM 21226 / LMG 7866 / NBRC 102419 / NCTC 12128 / CDC 0568-73).